An 809-amino-acid chain; its full sequence is Probable disease resistance protein At5g66900 (809 aa).

Positions 1-150 constitute an RPW8 domain; sequence MNDWASLGIG…LSKRMDLLSV (150 aa). Positions 50–86 form a coiled coil; sequence PLTQKIDSMQKELDFGVKELKELRDTIERADVAVRKF. NB-ARC domains follow at residues 153–280 and 339–438; these read PVFR…DDVW and SPDE…DMWV. 194–201 serves as a coordination point for ATP; it reads APPGCGKT. A coiled-coil region spans residues 494–515; that stretch reads QSEFKENLERKRLNLEILENTF. LRR repeat units follow at residues 650 to 672, 674 to 696, 698 to 720, and 722 to 744; these read KLQE…ISEI, SLKT…IGNL, RLEV…TEGL, and NLRF…IGKL.

It belongs to the disease resistance NB-LRR family.

Its function is as follows. Probable disease resistance protein. The polypeptide is Probable disease resistance protein At5g66900 (Arabidopsis thaliana (Mouse-ear cress)).